The primary structure comprises 93 residues: Em protein H5 (93 aa).

The interval 1–93 (MASGQQERSE…IDESKFKTKS (93 aa)) is disordered. Basic and acidic residues-rich tracts occupy residues 7-19 (ERSELDRMAREGE), 32-62 (EAQEHLADGRSRGGETRKEQLGEEGYREMGR), and 73-93 (GGERAAREGIEIDESKFKTKS).

The protein belongs to the small hydrophilic plant seed protein family.

Its function is as follows. It is thought to provide protection for the cytoplasm during the desiccation stage of embryo development. The protein is Em protein H5 (EMH5) of Triticum aestivum (Wheat).